We begin with the raw amino-acid sequence, 460 residues long: Phosphoenolpyruvate carboxylase (460 aa).

The protein belongs to the PEPCase type 2 family. In terms of assembly, homotetramer. Requires Mg(2+) as cofactor.

It carries out the reaction oxaloacetate + phosphate = phosphoenolpyruvate + hydrogencarbonate. Catalyzes the irreversible beta-carboxylation of phosphoenolpyruvate (PEP) to form oxaloacetate (OAA), a four-carbon dicarboxylic acid source for the tricarboxylic acid cycle. The sequence is that of Phosphoenolpyruvate carboxylase from Pyrobaculum arsenaticum (strain DSM 13514 / JCM 11321 / PZ6).